Here is a 177-residue protein sequence, read N- to C-terminus: Bifunctional protein PyrR (177 aa).

The short motif at 98-110 (IILVDDVIYTGRT) is the PRPP-binding element.

This sequence belongs to the purine/pyrimidine phosphoribosyltransferase family. PyrR subfamily. As to quaternary structure, homodimer and homohexamer; in equilibrium.

The catalysed reaction is UMP + diphosphate = 5-phospho-alpha-D-ribose 1-diphosphate + uracil. Regulates transcriptional attenuation of the pyrimidine nucleotide (pyr) operon by binding in a uridine-dependent manner to specific sites on pyr mRNA. This disrupts an antiterminator hairpin in the RNA and favors formation of a downstream transcription terminator, leading to a reduced expression of downstream genes. Its function is as follows. Also displays a weak uracil phosphoribosyltransferase activity which is not physiologically significant. This Clostridium kluyveri (strain ATCC 8527 / DSM 555 / NBRC 12016 / NCIMB 10680 / K1) protein is Bifunctional protein PyrR.